We begin with the raw amino-acid sequence, 75 residues long: ATP synthase subunit c (75 aa).

Helical transmembrane passes span 8–28 (FLGI…VSNI) and 54–74 (AALT…LIFV).

It belongs to the ATPase C chain family. F-type ATPases have 2 components, F(1) - the catalytic core - and F(0) - the membrane proton channel. F(1) has five subunits: alpha(3), beta(3), gamma(1), delta(1), epsilon(1). F(0) has three main subunits: a(1), b(2) and c(10-14). The alpha and beta chains form an alternating ring which encloses part of the gamma chain. F(1) is attached to F(0) by a central stalk formed by the gamma and epsilon chains, while a peripheral stalk is formed by the delta and b chains.

It is found in the cell inner membrane. Functionally, f(1)F(0) ATP synthase produces ATP from ADP in the presence of a proton or sodium gradient. F-type ATPases consist of two structural domains, F(1) containing the extramembraneous catalytic core and F(0) containing the membrane proton channel, linked together by a central stalk and a peripheral stalk. During catalysis, ATP synthesis in the catalytic domain of F(1) is coupled via a rotary mechanism of the central stalk subunits to proton translocation. In terms of biological role, key component of the F(0) channel; it plays a direct role in translocation across the membrane. A homomeric c-ring of between 10-14 subunits forms the central stalk rotor element with the F(1) delta and epsilon subunits. The sequence is that of ATP synthase subunit c from Neorickettsia sennetsu (strain ATCC VR-367 / Miyayama) (Ehrlichia sennetsu).